The following is a 182-amino-acid chain: Ribosome maturation factor RimM (182 aa).

In terms of domain architecture, PRC barrel spans 103–182 (EDEFYWRELF…RIEVDWDPAF (80 aa)).

It belongs to the RimM family. As to quaternary structure, binds ribosomal protein uS19.

It is found in the cytoplasm. In terms of biological role, an accessory protein needed during the final step in the assembly of 30S ribosomal subunit, possibly for assembly of the head region. Essential for efficient processing of 16S rRNA. May be needed both before and after RbfA during the maturation of 16S rRNA. It has affinity for free ribosomal 30S subunits but not for 70S ribosomes. The protein is Ribosome maturation factor RimM of Vibrio cholerae serotype O1 (strain ATCC 39315 / El Tor Inaba N16961).